The sequence spans 597 residues: Aspartate--tRNA(Asp/Asn) ligase (597 aa).

L-aspartate is bound at residue Glu-178. The segment at 202 to 205 (QLFK) is aspartate. Position 224 (Arg-224) interacts with L-aspartate. Residues 224-226 (RDE) and Gln-233 contribute to the ATP site. His-458 provides a ligand contact to L-aspartate. Residue Glu-488 participates in ATP binding. Arg-495 serves as a coordination point for L-aspartate. 540–543 (GLDR) serves as a coordination point for ATP.

This sequence belongs to the class-II aminoacyl-tRNA synthetase family. Type 1 subfamily. Homodimer.

Its subcellular location is the cytoplasm. The catalysed reaction is tRNA(Asx) + L-aspartate + ATP = L-aspartyl-tRNA(Asx) + AMP + diphosphate. Its function is as follows. Aspartyl-tRNA synthetase with relaxed tRNA specificity since it is able to aspartylate not only its cognate tRNA(Asp) but also tRNA(Asn). Reaction proceeds in two steps: L-aspartate is first activated by ATP to form Asp-AMP and then transferred to the acceptor end of tRNA(Asp/Asn). This chain is Aspartate--tRNA(Asp/Asn) ligase, found in Cyanothece sp. (strain PCC 7425 / ATCC 29141).